We begin with the raw amino-acid sequence, 492 residues long: UDP-glucosyl transferase 73DL1 (492 aa).

The active-site Proton acceptor is His-27. The active-site Charge relay is the Asp-131. UDP-binding residues include Trp-352, Val-353, His-370, Thr-375, Glu-378, and Tyr-392.

This sequence belongs to the UDP-glycosyltransferase family. In terms of tissue distribution, mainly expressed in flowers, flower buds and young leaves, and, to a lesser extent, in old leaves, stems and roots.

It participates in secondary metabolite biosynthesis; terpenoid biosynthesis. Functionally, component of the oleanane-type triterpene saponins (e.g. saponarioside A and saponarioside B) biosynthetic pathway, leading to the production of natural products with detergent properties used as traditional sources of soap. A glycosyltransferase that mediates the conversion of QA-mono to QA-di via the elongation of the C-3 sugar chain with a D-galactose. The chain is UDP-glucosyl transferase 73DL1 from Saponaria officinalis (Common soapwort).